A 242-amino-acid polypeptide reads, in one-letter code: 3-oxoacyl-[acyl-carrier-protein] reductase FabG (242 aa).

NADP(+) contacts are provided by residues Gly9–Arg12, Arg34, Asp60–Val61, and Asn87. Substrate is bound at residue Ser140. The active-site Proton acceptor is the Tyr153. NADP(+) is bound by residues Tyr153–Lys157 and Ile186.

It belongs to the short-chain dehydrogenases/reductases (SDR) family. Homotetramer.

The catalysed reaction is a (3R)-hydroxyacyl-[ACP] + NADP(+) = a 3-oxoacyl-[ACP] + NADPH + H(+). It functions in the pathway lipid metabolism; fatty acid biosynthesis. Its function is as follows. Catalyzes the NADPH-dependent reduction of beta-ketoacyl-ACP substrates to beta-hydroxyacyl-ACP products, the first reductive step in the elongation cycle of fatty acid biosynthesis. The polypeptide is 3-oxoacyl-[acyl-carrier-protein] reductase FabG (fabG) (Aggregatibacter actinomycetemcomitans (Actinobacillus actinomycetemcomitans)).